The chain runs to 258 residues: Lipoprotein-releasing system ATP-binding protein LolD (258 aa).

Residues 5 to 244 (LQCCQLSKSY…PTSSITDPAN (240 aa)) enclose the ABC transporter domain. 41-48 (GSSGCGKS) contacts ATP. The interval 222–258 (LRPLSDNSEQALPPTSSITDPANNIKDNEPQANERHV) is disordered. A compositionally biased stretch (polar residues) spans 226-243 (SDNSEQALPPTSSITDPA). Residues 247-258 (KDNEPQANERHV) are compositionally biased toward basic and acidic residues.

The protein belongs to the ABC transporter superfamily. Lipoprotein translocase (TC 3.A.1.125) family. The complex is composed of two ATP-binding proteins (LolD) and two transmembrane proteins (LolC and LolE).

Its subcellular location is the cell inner membrane. Part of the ABC transporter complex LolCDE involved in the translocation of mature outer membrane-directed lipoproteins, from the inner membrane to the periplasmic chaperone, LolA. Responsible for the formation of the LolA-lipoprotein complex in an ATP-dependent manner. This is Lipoprotein-releasing system ATP-binding protein LolD from Colwellia psychrerythraea (strain 34H / ATCC BAA-681) (Vibrio psychroerythus).